We begin with the raw amino-acid sequence, 275 residues long: Glucosamine-6-phosphate deaminase 2 (275 aa).

Asp-72 acts as the Proton acceptor; for enolization step in catalysis. A coiled-coil region spans residues 102-131 (NNAHILDGNASDLQAECEDFERKIKEAGGI). Residue Asp-141 is the For ring-opening step of the active site. Catalysis depends on His-143, which acts as the Proton acceptor; for ring-opening step. Catalysis depends on Glu-148, which acts as the For ring-opening step.

It belongs to the glucosamine/galactosamine-6-phosphate isomerase family. As to quaternary structure, homohexamer.

It is found in the cytoplasm. It carries out the reaction alpha-D-glucosamine 6-phosphate + H2O = beta-D-fructose 6-phosphate + NH4(+). In terms of biological role, catalyzes the reversible conversion of alpha-D-glucosamine 6-phosphate (GlcN-6P) into beta-D-fructose 6-phosphate (Fru-6P) and ammonium ion, a regulatory reaction step in de novo uridine diphosphate-N-acetyl-alpha-D-glucosamine (UDP-GlcNAc) biosynthesis via hexosamine pathway. This Xenopus laevis (African clawed frog) protein is Glucosamine-6-phosphate deaminase 2.